Reading from the N-terminus, the 351-residue chain is CREB homolog crh-2 (351 aa).

Disordered stretches follow at residues 46 to 104 (EPCT…EPLG) and 119 to 149 (SPSA…HQQQ). Residues 82–95 (GSSSGSPSSSLSSP) are compositionally biased toward low complexity. In terms of domain architecture, bZIP spans 282-345 (SLKIVRRKIK…RDLQQKLHQY (64 aa)). The segment at 284–304 (KIVRRKIKNKLSAQESRRKRK) is basic motif. The leucine-zipper stretch occupies residues 307–314 (IDALEGRL).

This sequence belongs to the bZIP family.

It localises to the nucleus. In terms of biological role, transcription factor. Plays a role in regulating the developmentally arrested larval state known as dauer, when induced by long-term exposure to the Gram-negative bacterium P.aeruginosa PAO1, but dispensable for dauer formation induced by starvation. Involved in regulating expression of microRNA mir-243, during long-term exposure to P.aeruginosa PAO1. This is CREB homolog crh-2 from Caenorhabditis elegans.